Reading from the N-terminus, the 187-residue chain is MVCSPVTLRIAPPDRRFSRSAIPEQIISSTLSSPSSNAPDPCAKETVLSALKEKKKKRTVEEEDQIFLDGQENKRSCLVDGLTDASSAFKVPRPGPDTLQFTVDVFHFANDSRNMIYITCHLKVTLAEQDPDELNKACSFSKPSNSWFPVEGLADICQCCNKGDCGTPSHSRRQPRVVSQWSTSASL.

A disordered region spans residues 166–187; that stretch reads GTPSHSRRQPRVVSQWSTSASL. Polar residues predominate over residues 177-187; it reads VVSQWSTSASL.

Expressed in spleen, thymus, pancreas, testis, ovary, small intestine, colon and lymphocytes.

The polypeptide is POM121 and ZP3 fusion protein (POMZP3) (Homo sapiens (Human)).